The sequence spans 362 residues: Oxysterol-binding protein 5 (362 aa).

It belongs to the OSBP family.

In Dictyostelium discoideum (Social amoeba), this protein is Oxysterol-binding protein 5 (osbE).